The chain runs to 135 residues: C-type lectin LmsL (135 aa).

Cystine bridges form between Cys3–Cys14, Cys31–Cys131, Cys38–Cys133, and Cys106–Cys123. The 123-residue stretch at 10–132 (MNGLCYKIFD…CESKNAFLCQ (123 aa)) folds into the C-type lectin domain. Ca(2+) is bound by residues Gln96, Asp98, Glu104, Asn119, and Asp120. A Galactose-binding motif is present at residues 96–98 (QPD).

Belongs to the true venom lectin family. Homodimer; disulfide-linked. Expressed by the venom gland.

It is found in the secreted. In terms of biological role, galactose-binding protein which recognizes specific carbohydrate structures and agglutinates a variety of animal cells by binding to cell-surface glycoproteins and glycolipids. Is a calcium-dependent lectin. Shows high hemagglutinating activity, that is inhibited by lactose, galactose and inositol. The sequence is that of C-type lectin LmsL from Lachesis stenophrys (Central American bushmaster).